A 302-amino-acid chain; its full sequence is Digeranylgeranylglyceryl phosphate synthase (302 aa).

A run of 8 helical transmembrane segments spans residues L21–G41, I43–Y63, I103–L123, I144–M164, G167–L187, A218–I238, M244–L264, and A282–M302.

This sequence belongs to the UbiA prenyltransferase family. DGGGP synthase subfamily. The cofactor is Mg(2+).

The protein localises to the cell membrane. The catalysed reaction is sn-3-O-(geranylgeranyl)glycerol 1-phosphate + (2E,6E,10E)-geranylgeranyl diphosphate = 2,3-bis-O-(geranylgeranyl)-sn-glycerol 1-phosphate + diphosphate. It participates in membrane lipid metabolism; glycerophospholipid metabolism. Prenyltransferase that catalyzes the transfer of the geranylgeranyl moiety of geranylgeranyl diphosphate (GGPP) to the C2 hydroxyl of (S)-3-O-geranylgeranylglyceryl phosphate (GGGP). This reaction is the second ether-bond-formation step in the biosynthesis of archaeal membrane lipids. This is Digeranylgeranylglyceryl phosphate synthase from Hyperthermus butylicus (strain DSM 5456 / JCM 9403 / PLM1-5).